The following is a 251-amino-acid chain: Uridylate kinase (251 aa).

19–22 (KLSG) contacts ATP. Gly61 contacts UMP. Positions 62 and 66 each coordinate ATP. UMP contacts are provided by residues Asp81 and 142–149 (TGNPYFTT). ATP is bound by residues Thr169, Tyr175, and Asp178.

It belongs to the UMP kinase family. Homohexamer.

The protein resides in the cytoplasm. The enzyme catalyses UMP + ATP = UDP + ADP. The protein operates within pyrimidine metabolism; CTP biosynthesis via de novo pathway; UDP from UMP (UMPK route): step 1/1. Its activity is regulated as follows. Inhibited by UTP. Functionally, catalyzes the reversible phosphorylation of UMP to UDP. The sequence is that of Uridylate kinase from Anaeromyxobacter dehalogenans (strain 2CP-C).